The following is a 252-amino-acid chain: Membrane protein insertase YidC (252 aa).

A signal peptide spans 1–19 (MKKVLWIIIIILMVGALAG). Cys-20 is lipidated: N-palmitoyl cysteine. Cys-20 is lipidated: S-diacylglycerol cysteine. Transmembrane regions (helical) follow at residues 34–54 (IWNHFFVYPLSWVLISVADLL), 58–78 (FGLSIIVVTIGIRLFLLPLMI), 131–151 (MAGCLPLFIQLPVMMAFYFAI), 162–182 (FLWFDLGSPDPLYILPVVAGI), 201–221 (VIIYIMPVMIVVAGVTLPSAL), and 223–243 (LYWVVGNLFMIIQTYFTVVRF).

Belongs to the OXA1/ALB3/YidC family. Type 2 subfamily.

Its subcellular location is the cell membrane. Its function is as follows. Required for the insertion and/or proper folding and/or complex formation of integral membrane proteins into the membrane. Involved in integration of membrane proteins that insert both dependently and independently of the Sec translocase complex, as well as at least some lipoproteins. This is Membrane protein insertase YidC from Alkalihalophilus pseudofirmus (strain ATCC BAA-2126 / JCM 17055 / OF4) (Bacillus pseudofirmus).